The primary structure comprises 60 residues: Waprin-Lio1 (60 aa).

Residues 1–8 (MLLGTTSA) form the signal peptide. A WAP domain is found at 9-59 (QVVRPGSCPNVDVPIPPLGLCRTTCQTDANCQEGRKCCKNGCGFMTCETAR). Intrachain disulfides connect cysteine 16–cysteine 46, cysteine 29–cysteine 50, cysteine 33–cysteine 45, and cysteine 39–cysteine 55.

Belongs to the venom waprin family. As to expression, expressed by the venom gland.

It localises to the secreted. Its function is as follows. Damages membranes of susceptible bacteria. Has no hemolytic activity. Not toxic to mice. Does not inhibit the proteinases elastase and cathepsin G. This is Waprin-Lio1 from Erythrolamprus poecilogyrus (Water snake).